The following is a 292-amino-acid chain: ATP synthase gamma chain (292 aa).

It belongs to the ATPase gamma chain family. In terms of assembly, F-type ATPases have 2 components, CF(1) - the catalytic core - and CF(0) - the membrane proton channel. CF(1) has five subunits: alpha(3), beta(3), gamma(1), delta(1), epsilon(1). CF(0) has three main subunits: a, b and c.

Its subcellular location is the cell inner membrane. Functionally, produces ATP from ADP in the presence of a proton gradient across the membrane. The gamma chain is believed to be important in regulating ATPase activity and the flow of protons through the CF(0) complex. The sequence is that of ATP synthase gamma chain from Bradyrhizobium sp. (strain ORS 278).